The following is a 318-amino-acid chain: uncharacterized protein (318 aa).

It to A.aeolicus AA07 and AA34.

This is an uncharacterized protein from Aquifex aeolicus (strain VF5).